We begin with the raw amino-acid sequence, 233 residues long: MADS-box protein CMB1 (233 aa).

In terms of domain architecture, MADS-box spans 3 to 58; that stretch reads RGRVELKRIENKINRQVTFAKRRNGLLKKAYELSVLCDAEVALIVFSNRGKLYEFC. One can recognise a K-box domain in the interval 87–177; it reads TESSYQEYLK…KTKLEESCAS (91 aa).

It is found in the nucleus. The sequence is that of MADS-box protein CMB1 (CMB1) from Dianthus caryophyllus (Carnation).